Reading from the N-terminus, the 202-residue chain is Holliday junction resolvase RecU (202 aa).

Residues T85, D87, E100, and Q119 each contribute to the Mg(2+) site.

The protein belongs to the RecU family. Mg(2+) serves as cofactor.

It localises to the cytoplasm. The catalysed reaction is Endonucleolytic cleavage at a junction such as a reciprocal single-stranded crossover between two homologous DNA duplexes (Holliday junction).. Endonuclease that resolves Holliday junction intermediates in genetic recombination. Cleaves mobile four-strand junctions by introducing symmetrical nicks in paired strands. Promotes annealing of linear ssDNA with homologous dsDNA. Required for DNA repair, homologous recombination and chromosome segregation. The chain is Holliday junction resolvase RecU from Streptococcus uberis (strain ATCC BAA-854 / 0140J).